A 174-amino-acid polypeptide reads, in one-letter code: Peptide methionine sulfoxide reductase MsrA (174 aa).

The active site involves Cys11.

The protein belongs to the MsrA Met sulfoxide reductase family.

The catalysed reaction is L-methionyl-[protein] + [thioredoxin]-disulfide + H2O = L-methionyl-(S)-S-oxide-[protein] + [thioredoxin]-dithiol. It catalyses the reaction [thioredoxin]-disulfide + L-methionine + H2O = L-methionine (S)-S-oxide + [thioredoxin]-dithiol. Its function is as follows. Has an important function as a repair enzyme for proteins that have been inactivated by oxidation. Catalyzes the reversible oxidation-reduction of methionine sulfoxide in proteins to methionine. This chain is Peptide methionine sulfoxide reductase MsrA, found in Pasteurella multocida (strain Pm70).